We begin with the raw amino-acid sequence, 1465 residues long: Transcriptional elongation regulator MINIYO (1465 aa).

Disordered stretches follow at residues K27 to R85, L186 to I211, and T1113 to I1135.

This sequence belongs to the RPAP1 family. In terms of assembly, interacts with HAG3, NRPB3 and NRPB10L. In terms of tissue distribution, expressed in root and shoot apices and in leaf and flower primordia. Detected in the endosperm, embryo, meristems and in organ primordia, but not in mature cells. Found exclusively in the vascular bundles in mature leaves.

Its subcellular location is the cytoplasm. The protein resides in the nucleus. Its function is as follows. Positive regulator of transcriptional elongation that is essential for cells to initiate differentiation. Interacts with RNA polymerase II and the Elongator complex and is required to sustain global levels of transcriptional elongation activity, specifically in differentiating tissues. The chain is Transcriptional elongation regulator MINIYO from Arabidopsis thaliana (Mouse-ear cress).